Reading from the N-terminus, the 280-residue chain is 2-dehydro-3-deoxyphosphooctonate aldolase (280 aa).

The protein belongs to the KdsA family.

The protein resides in the cytoplasm. The catalysed reaction is D-arabinose 5-phosphate + phosphoenolpyruvate + H2O = 3-deoxy-alpha-D-manno-2-octulosonate-8-phosphate + phosphate. It functions in the pathway carbohydrate biosynthesis; 3-deoxy-D-manno-octulosonate biosynthesis; 3-deoxy-D-manno-octulosonate from D-ribulose 5-phosphate: step 2/3. Its pathway is bacterial outer membrane biogenesis; lipopolysaccharide biosynthesis. This chain is 2-dehydro-3-deoxyphosphooctonate aldolase, found in Neisseria meningitidis serogroup C / serotype 2a (strain ATCC 700532 / DSM 15464 / FAM18).